A 356-amino-acid chain; its full sequence is Histidinol-phosphate aminotransferase (356 aa).

Lys-222 bears the N6-(pyridoxal phosphate)lysine mark.

Belongs to the class-II pyridoxal-phosphate-dependent aminotransferase family. Histidinol-phosphate aminotransferase subfamily. Homodimer. Pyridoxal 5'-phosphate is required as a cofactor.

The enzyme catalyses L-histidinol phosphate + 2-oxoglutarate = 3-(imidazol-4-yl)-2-oxopropyl phosphate + L-glutamate. It functions in the pathway amino-acid biosynthesis; L-histidine biosynthesis; L-histidine from 5-phospho-alpha-D-ribose 1-diphosphate: step 7/9. The sequence is that of Histidinol-phosphate aminotransferase from Lactiplantibacillus plantarum (strain ATCC BAA-793 / NCIMB 8826 / WCFS1) (Lactobacillus plantarum).